The following is a 222-amino-acid chain: Superoxide dismutase [Mn], mitochondrial (222 aa).

Residues 1 to 24 (MLSRAVCGTSRQLAPVLGYLGSRQ) constitute a mitochondrion transit peptide. Residue His-50 participates in Mn(2+) binding. Tyr-58 carries the post-translational modification 3'-nitrotyrosine. Residues Lys-68 and Lys-75 each carry the N6-acetyllysine; alternate modification. 2 positions are modified to N6-succinyllysine; alternate: Lys-68 and Lys-75. His-98 is a binding site for Mn(2+). Lys-114 bears the N6-acetyllysine mark. Lys-122 and Lys-130 each carry N6-acetyllysine; alternate. N6-succinyllysine; alternate is present on residues Lys-122 and Lys-130. Positions 183 and 187 each coordinate Mn(2+). N6-acetyllysine is present on Lys-202.

It belongs to the iron/manganese superoxide dismutase family. As to quaternary structure, homotetramer. Requires Mn(2+) as cofactor. Post-translationally, nitrated under oxidative stress. Nitration coupled with oxidation inhibits the catalytic activity. In terms of processing, acetylation at Lys-122 decreases enzymatic activity. Deacetylated by SIRT3 upon exposure to ionizing radiations or after long fasting. Polyubiquitinated; leading to proteasomal degradation. Deubiquitinated by USP36 which increases protein stability.

The protein resides in the mitochondrion matrix. The enzyme catalyses 2 superoxide + 2 H(+) = H2O2 + O2. Its function is as follows. Destroys superoxide anion radicals which are normally produced within the cells and which are toxic to biological systems. The protein is Superoxide dismutase [Mn], mitochondrial (SOD2) of Homo sapiens (Human).